Consider the following 559-residue polypeptide: Potassium-transporting ATPase potassium-binding subunit (559 aa).

A run of 12 helical transmembrane segments spans residues 6 to 26 (FLLI…LGNV), 63 to 83 (LLAI…MLML), 131 to 151 (VGLT…IFAL), 173 to 193 (ITLW…IQQG), 253 to 273 (FVQM…FGDV), 283 to 303 (LLWA…WAEW), 327 to 347 (FGIL…CGAV), 356 to 376 (ALGG…FGGV), 379 to 399 (GLYG…LMIG), 416 to 436 (LTAL…ALAL), 484 to 504 (LLAF…MAIA), and 524 to 544 (GALF…LTFI).

The protein belongs to the KdpA family. In terms of assembly, the system is composed of three essential subunits: KdpA, KdpB and KdpC.

The protein localises to the cell inner membrane. Functionally, part of the high-affinity ATP-driven potassium transport (or Kdp) system, which catalyzes the hydrolysis of ATP coupled with the electrogenic transport of potassium into the cytoplasm. This subunit binds the periplasmic potassium ions and delivers the ions to the membrane domain of KdpB through an intramembrane tunnel. The protein is Potassium-transporting ATPase potassium-binding subunit of Enterobacter sp. (strain 638).